Reading from the N-terminus, the 279-residue chain is DegV domain-containing protein M6_Spy1246 (279 aa).

The region spanning 4-278 (IKIVTDSSIT…EGAFAVMVRY (275 aa)) is the DegV domain. Positions 62 and 95 each coordinate hexadecanoate.

In terms of biological role, may bind long-chain fatty acids, such as palmitate, and may play a role in lipid transport or fatty acid metabolism. In Streptococcus pyogenes serotype M6 (strain ATCC BAA-946 / MGAS10394), this protein is DegV domain-containing protein M6_Spy1246.